The following is a 317-amino-acid chain: MARRPKGRFIDGIVLLDKDTGMSSNFALQRVKRFFNANKAGHTGALDPLATGMLPICLGEATKFSQHLLDSDKRYLVTAKLGQRTDTSDSDGEVVQTRPVNVTQALLDEKLAFFRGTTQQIPSMYSALKYQGQPLYKYAREGIEVPRESRPITVFELNFIKLEGDELTLDIHCSKGTYIRTIIDDLGEMLGCGAHVVMLRRTQVAEYPYEKMVTLAQLEALLEQAHRQDVAPQTLMDPLLLPMDTAVAKFAEINLPEAMLYYVMQGQAIQAAGLKPDELVRITIGDERRFVGMGIMNDDGLLAPKRLIVIHDNDAAE.

The active-site Nucleophile is the aspartate 47.

The protein belongs to the pseudouridine synthase TruB family. Type 1 subfamily.

The enzyme catalyses uridine(55) in tRNA = pseudouridine(55) in tRNA. Functionally, responsible for synthesis of pseudouridine from uracil-55 in the psi GC loop of transfer RNAs. The sequence is that of tRNA pseudouridine synthase B from Shewanella frigidimarina (strain NCIMB 400).